The following is a 161-amino-acid chain: MNLLRPKLKYFILAILIIAADLYTKYLANTYLEFAQSVKITSFFNLTLLYNHGAAFSLLSNDQTSWQMIMFSTISLIAAIVLIYLIIKQPITEKINLFSFALILGGALGNFYDRAFQGYVIDFLDFHIGNYHWPSFNIADSAITCGVVILIAASLFTKKKS.

4 helical membrane passes run 8–28 (LKYF…KYLA), 40–60 (ITSF…SLLS), 67–87 (QMIM…YLII), and 91–111 (ITEK…LGNF). Active-site residues include Asp122 and Asp140. The helical transmembrane segment at 136-156 (FNIADSAITCGVVILIAASLF) threads the bilayer.

Belongs to the peptidase A8 family.

The protein localises to the cell inner membrane. The enzyme catalyses Release of signal peptides from bacterial membrane prolipoproteins. Hydrolyzes -Xaa-Yaa-Zaa-|-(S,diacylglyceryl)Cys-, in which Xaa is hydrophobic (preferably Leu), and Yaa (Ala or Ser) and Zaa (Gly or Ala) have small, neutral side chains.. Its pathway is protein modification; lipoprotein biosynthesis (signal peptide cleavage). Functionally, this protein specifically catalyzes the removal of signal peptides from prolipoproteins. The sequence is that of Lipoprotein signal peptidase from Francisella tularensis subsp. novicida (strain U112).